The following is a 289-amino-acid chain: D-psicose 3-epimerase (289 aa).

Residues Tyr-6 and Ala-107 each contribute to the substrate site. Catalysis depends on Glu-150, which acts as the Proton donor/acceptor. Glu-150 provides a ligand contact to Mn(2+). Residues Glu-156 and 183–186 (DTFH) contribute to the substrate site. 2 residues coordinate Mn(2+): Asp-183 and His-209. Arg-215 is a binding site for substrate. Glu-244 (proton donor/acceptor) is an active-site residue. A Mn(2+)-binding site is contributed by Glu-244.

The protein belongs to the hyi family. Homotetramer. Mn(2+) is required as a cofactor. It depends on Co(2+) as a cofactor.

The catalysed reaction is D-allulose = keto-D-fructose. Inhibited by Zn(2+) and Cu(2+). In terms of biological role, involved in the biosynthesis of D-psicose. Catalyzes the reversible epimerization of D-fructose at the C3 position to yield D-psicose. The enzyme is highly specific for D-psicose and shows very low activity with D-tagatose. The substrate specificity decreases in the following order: D-fructose, D-tagatose, D-ribulose, D-xylulose, and D-sorbose. It shows a higher level of activity for cis ketoses than for trans-ketoses. This chain is D-psicose 3-epimerase (dpe), found in Agrobacterium fabrum (strain C58 / ATCC 33970) (Agrobacterium tumefaciens (strain C58)).